The primary structure comprises 295 residues: Protease HtpX (295 aa).

The next 2 membrane-spanning stretches (helical) occupy residues 4–24 (ILLF…TLSL) and 42–62 (QLLV…LFIS). His147 lines the Zn(2+) pocket. Glu148 is an active-site residue. His151 provides a ligand contact to Zn(2+). Transmembrane regions (helical) follow at residues 158–178 (VTLA…ARII) and 195–215 (IAYF…ASAI). Zn(2+) is bound at residue Glu224.

This sequence belongs to the peptidase M48B family. It depends on Zn(2+) as a cofactor.

It is found in the cell inner membrane. In Pseudomonas fluorescens (strain SBW25), this protein is Protease HtpX.